The chain runs to 681 residues: uncharacterized protein (681 aa).

In the N-terminal section; belongs to the purine/pyrimidine phosphoribosyltransferase family.

This is an uncharacterized protein from Mycobacterium tuberculosis (strain CDC 1551 / Oshkosh).